The chain runs to 78 residues: Acyl carrier protein (78 aa).

A Carrier domain is found at 1 to 77 (MALIDEIKDV…DAAKYIEEHK (77 aa)). Serine 37 is modified (O-(pantetheine 4'-phosphoryl)serine).

It belongs to the acyl carrier protein (ACP) family. 4'-phosphopantetheine is transferred from CoA to a specific serine of apo-ACP by AcpS. This modification is essential for activity because fatty acids are bound in thioester linkage to the sulfhydryl of the prosthetic group.

Its subcellular location is the secreted. Its pathway is lipid metabolism; fatty acid biosynthesis. Carrier of the growing fatty acid chain in fatty acid biosynthesis. Has hemolytic activity forming pores approximately 1 nm in diameter into erythrocytes. Is able to induce murine colonic lesions and to disrupt the integrity of epithelial cell monolayers. The protein is Acyl carrier protein (acpP) of Brachyspira hyodysenteriae (Treponema hyodysenteriae).